Here is a 496-residue protein sequence, read N- to C-terminus: Bifunctional protein HldE (496 aa).

A ribokinase region spans residues 1–331 (MDPTPALAEI…AAVHQEEVSA (331 aa)). Position 206–209 (206–209 (NRKE)) interacts with ATP. Residue aspartate 276 is part of the active site. Residues 358 to 496 (FTNGCFDLLH…GGSRRSGDTL (139 aa)) are cytidylyltransferase.

The protein in the N-terminal section; belongs to the carbohydrate kinase PfkB family. This sequence in the C-terminal section; belongs to the cytidylyltransferase family. As to quaternary structure, homodimer.

It carries out the reaction D-glycero-beta-D-manno-heptose 7-phosphate + ATP = D-glycero-beta-D-manno-heptose 1,7-bisphosphate + ADP + H(+). The enzyme catalyses D-glycero-beta-D-manno-heptose 1-phosphate + ATP + H(+) = ADP-D-glycero-beta-D-manno-heptose + diphosphate. It functions in the pathway nucleotide-sugar biosynthesis; ADP-L-glycero-beta-D-manno-heptose biosynthesis; ADP-L-glycero-beta-D-manno-heptose from D-glycero-beta-D-manno-heptose 7-phosphate: step 1/4. It participates in nucleotide-sugar biosynthesis; ADP-L-glycero-beta-D-manno-heptose biosynthesis; ADP-L-glycero-beta-D-manno-heptose from D-glycero-beta-D-manno-heptose 7-phosphate: step 3/4. In terms of biological role, catalyzes the phosphorylation of D-glycero-D-manno-heptose 7-phosphate at the C-1 position to selectively form D-glycero-beta-D-manno-heptose-1,7-bisphosphate. Functionally, catalyzes the ADP transfer from ATP to D-glycero-beta-D-manno-heptose 1-phosphate, yielding ADP-D-glycero-beta-D-manno-heptose. The chain is Bifunctional protein HldE from Rhodospirillum rubrum (strain ATCC 11170 / ATH 1.1.1 / DSM 467 / LMG 4362 / NCIMB 8255 / S1).